A 240-amino-acid polypeptide reads, in one-letter code: Uridylate kinase (240 aa).

ATP is bound at residue 13–16; sequence KISG. A UMP-binding site is contributed by Gly-55. Positions 56 and 60 each coordinate ATP. UMP contacts are provided by residues Asp-75 and 136 to 143; that span reads TGNPFFTT. 4 residues coordinate ATP: Thr-163, Gln-164, Tyr-169, and Asp-172.

It belongs to the UMP kinase family. Homohexamer.

The protein localises to the cytoplasm. It catalyses the reaction UMP + ATP = UDP + ADP. It functions in the pathway pyrimidine metabolism; CTP biosynthesis via de novo pathway; UDP from UMP (UMPK route): step 1/1. Inhibited by UTP. In terms of biological role, catalyzes the reversible phosphorylation of UMP to UDP. The protein is Uridylate kinase of Paramagnetospirillum magneticum (strain ATCC 700264 / AMB-1) (Magnetospirillum magneticum).